Here is a 120-residue protein sequence, read N- to C-terminus: Large ribosomal subunit protein bL17 (120 aa).

The protein belongs to the bacterial ribosomal protein bL17 family. As to quaternary structure, part of the 50S ribosomal subunit. Contacts protein L32.

In Mycoplasmopsis synoviae (strain 53) (Mycoplasma synoviae), this protein is Large ribosomal subunit protein bL17.